Reading from the N-terminus, the 351-residue chain is Molybdate-binding protein MolA (351 aa).

Residues 1-21 (MKLKSLLIACLLSSLSFSALA) form the signal peptide. Residues 41-322 (RAVVLQHQTL…WLAKALYPQR (282 aa)) form the Fe/B12 periplasmic-binding domain. Residues 47–48 (HQ), tyrosine 217, arginine 264, and 300–301 (GY) contribute to the molybdate site.

This sequence belongs to the bacterial solute-binding protein 8 family. In terms of assembly, the complex is composed of two ATP-binding proteins (MolC), two transmembrane proteins (MolB) and a solute-binding protein (MolA).

The protein localises to the periplasm. Its activity is regulated as follows. The MolBCA complex shows a decrease in affinity in the presence of increasing concentrations of substrate and nucleotide. In terms of biological role, part of the ABC transporter complex MolBCA involved in molybdate import. Functions as a low-affinity molybdate transporter. Binds to both molybdate and tungstate, but not to sulfate or phosphate. The sequence is that of Molybdate-binding protein MolA from Haemophilus influenzae (strain ATCC 51907 / DSM 11121 / KW20 / Rd).